Here is a 199-residue protein sequence, read N- to C-terminus: Elongation factor Ts (199 aa).

Residues 82–85 form an involved in Mg(2+) ion dislocation from EF-Tu region; the sequence is TDFV.

Belongs to the EF-Ts family.

It localises to the cytoplasm. Its function is as follows. Associates with the EF-Tu.GDP complex and induces the exchange of GDP to GTP. It remains bound to the aminoacyl-tRNA.EF-Tu.GTP complex up to the GTP hydrolysis stage on the ribosome. The polypeptide is Elongation factor Ts (Leptospira borgpetersenii serovar Hardjo-bovis (strain JB197)).